A 476-amino-acid chain; its full sequence is Cytosolic iron-sulfur assembly component 3 (476 aa).

An N-acetylalanine modification is found at Ala2. Cys24, Cys71, Cys74, Cys77, Cys190, Cys246, Cys395, and Cys399 together coordinate [4Fe-4S] cluster.

Belongs to the NARF family. External component of the CIA complex. In the CIA complex, interacts directly with CIAO1 and MMS19.

In terms of biological role, component of the cytosolic iron-sulfur protein assembly (CIA) complex, a multiprotein complex that mediates the incorporation of iron-sulfur cluster into extramitochondrial Fe/S proteins. Seems to negatively regulate the level of HIF1A expression, although this effect could be indirect. This chain is Cytosolic iron-sulfur assembly component 3, found in Pongo abelii (Sumatran orangutan).